The primary structure comprises 359 residues: C-X-C chemokine receptor type 4 (359 aa).

Positions 1-23 are important for chemokine binding and signaling; the sequence is MEPISVSIYTSDNYSEEVGSGDY. Residues 1–40 lie on the Extracellular side of the membrane; it reads MEPISVSIYTSDNYSEEVGSGDYDSNKEPCFRDENVHFNR. Sulfotyrosine is present on Y9. N13 carries an N-linked (GlcNAc...) asparagine glycan. At Y14 the chain carries Sulfotyrosine. An O-linked (Xyl...) (chondroitin sulfate) serine glycan is attached at S20. Residue Y23 is modified to Sulfotyrosine. Cystine bridges form between C30-C281 and C111-C193. A helical transmembrane segment spans residues 41 to 65; sequence IFLPTIYFIIFLTGIVGNGLVILVM. Topologically, residues 66-79 are cytoplasmic; that stretch reads GYQKKLRSMTDKYR. The helical transmembrane segment at 80 to 101 threads the bilayer; the sequence is LHLSVADLLFVITLPFWAVDAM. Residues 96-99 form a chemokine binding region; sequence WAVD. At 102-112 the chain is on the extracellular side; that stretch reads ADWYFGKFLCK. A helical transmembrane segment spans residues 113–132; sequence AVHIIYTVNLYSSVLILAFI. A chemokine binding region spans residues 115–119; that stretch reads HIIYT. Over 133 to 156 the chain is Cytoplasmic; it reads SLDRYLAIVHATNSQRPRKLLAEK. The short motif at 135–137 is the Important for signaling element; that stretch reads DRY. The segment at 137-149 is involved in dimerization; when bound to chemokine; sequence YLAIVHATNSQRP. The helical transmembrane segment at 157-176 threads the bilayer; it reads AVYVGVWIPALLLTIPDFIF. Over 177–202 the chain is Extracellular; that stretch reads ADVSQGDISQGDDRYICDRLYPDSLW. The segment at 193–197 is chemokine binding, important for signaling; it reads CDRLY. Residues 198–217 form an involved in dimerization region; that stretch reads PDSLWMVVFQFQHIMVGLIL. A helical transmembrane segment spans residues 203–223; sequence MVVFQFQHIMVGLILPGIVIL. The Cytoplasmic portion of the chain corresponds to 224–248; that stretch reads SCYCIIISKLSHSKGHQKRKALKTT. A helical membrane pass occupies residues 249 to 268; that stretch reads VILILAFFACWLPYYVGISI. Over 269–289 the chain is Extracellular; it reads DSFILLGVIKQGCDFESIVHK. The interval 273–275 is involved in dimerization; the sequence is LLG. The chain crosses the membrane as a helical span at residues 290–309; it reads WISITEALAFFHCCLNPILY. Topologically, residues 310 to 359 are cytoplasmic; sequence AFLGAKFKSSAQHALNSMSRGSSLKILSKGKRGGHSSVSTESESSSFHSS. Residues S326 and S328 each carry the phosphoserine modification. 2 positions are modified to phosphoserine; by PKC and GRK6: S331 and S332. The segment at 335–359 is disordered; the sequence is ILSKGKRGGHSSVSTESESSSFHSS. Residue S337 is modified to Phosphoserine; by GRK6. K338 participates in a covalent cross-link: Glycyl lysine isopeptide (Lys-Gly) (interchain with G-Cter in ubiquitin). Over residues 344-359 the composition is skewed to low complexity; sequence HSSVSTESESSSFHSS. A Phosphoserine; by GRK6 modification is found at S346. Phosphoserine is present on residues S355 and S358.

It belongs to the G-protein coupled receptor 1 family. As to quaternary structure, monomer. Can form homodimers. Interacts with CD164. Interacts with ARRB2; the interaction is dependent on the C-terminal phosphorylation of CXCR4 and allows activation of MAPK1 and MAPK3. Interacts with ARR3; the interaction is dependent on the C-terminal phosphorylation of CXCR4 and modulates calcium mobilization. Interacts with RNF113A; the interaction, enhanced by CXCL12, promotes CXCR4 ubiquitination and subsequent degradation. Interacts (via the cytoplasmic C-terminal) with ITCH (via the WW domains I and II); the interaction, enhanced by CXCL12, promotes CXCR4 ubiquitination and leads to its degradation. Interacts with extracellular ubiquitin. Interacts with DBN1; this interaction is enhanced by antigenic stimulation. Following LPS binding, may form a complex with GDF5, HSP90AA1 and HSPA8. Post-translationally, phosphorylated on agonist stimulation. Rapidly phosphorylated on serine and threonine residues in the C-terminal. Phosphorylation at Ser-331 and Ser-332 leads to recruitment of ITCH, ubiquitination and protein degradation. Ubiquitinated after ligand binding, leading to its degradation. Ubiquitinated by ITCH at the cell membrane on agonist stimulation. The ubiquitin-dependent mechanism, endosomal sorting complex required for transport (ESCRT), then targets CXCR4 for lysosomal degradation. This process is dependent also on prior Ser-/Thr-phosphorylation in the C-terminal of CXCR4. Also binding of ARRB1 to STAM negatively regulates CXCR4 sorting to lysosomes though modulating ubiquitination of SFR5S. In terms of processing, sulfation is required for efficient binding of CXCL12/SDF-1alpha and promotes its dimerization. Post-translationally, O- and N-glycosylated. N-glycosylation can mask coreceptor function. The O-glycosylation chondroitin sulfate attachment does not affect interaction with CXCL12/SDF-1alpha nor its coreceptor activity. Lymphocytes, macrophages, neutrophils, microglial cells and astrocytes. Found in spleen, thymus, bone marrow, lymph nodes and, at lower levels in brain, small intestine, stomach and kidney. CXCR4-A is predominant in all tissues tested. During embryonic development, high levels are detected in the endothelium of developing blood vessels and in many regions of the developing brain including the olfactory epithelium, olfactory bulb, hippocampus, cerebellum and spinal cord.

Its subcellular location is the cell membrane. It localises to the cell junction. It is found in the early endosome. The protein resides in the late endosome. The protein localises to the lysosome. Its function is as follows. Receptor for the C-X-C chemokine CXCL12/SDF-1 that transduces a signal by increasing intracellular calcium ion levels and enhancing MAPK1/MAPK3 activation. Involved in the AKT signaling cascade. Plays a role in regulation of cell migration, e.g. during wound healing. Acts as a receptor for extracellular ubiquitin; leading to enhanced intracellular calcium ions and reduced cellular cAMP levels. Binds bacterial lipopolysaccharide (LPS) et mediates LPS-induced inflammatory response, including TNF secretion by monocytes. Involved in hematopoiesis and in cardiac ventricular septum formation. Also plays an essential role in vascularization of the gastrointestinal tract, probably by regulating vascular branching and/or remodeling processes in endothelial cells. Involved in cerebellar development. In the CNS, could mediate hippocampal-neuron survival. This Mus musculus (Mouse) protein is C-X-C chemokine receptor type 4 (Cxcr4).